The following is a 467-amino-acid chain: Neuromedin-K receptor (467 aa).

Topologically, residues 1–86 (MDSFAAAETW…TNQFVQPSWR (86 aa)) are extracellular. 3 N-linked (GlcNAc...) asparagine glycosylation sites follow: asparagine 23, asparagine 50, and asparagine 75. A helical transmembrane segment spans residues 87–109 (IALWSLAYGVVVAVAVFGNLIVI). The Cytoplasmic portion of the chain corresponds to 110–119 (WIILAHKRMR). Residues 120-141 (TVTNYFLVNLAFSDASMAAFNT) traverse the membrane as a helical segment. At 142 to 161 (LVNFIYALHSEWYFGANYCR) the chain is on the extracellular side. A disulfide bridge connects residues cysteine 160 and cysteine 235. The chain crosses the membrane as a helical span at residues 162-183 (FQNFFPITAVFASIYSMTAIAV). The Cytoplasmic segment spans residues 184–203 (DRYMAIIDPLKPRLSATATK). The chain crosses the membrane as a helical span at residues 204–224 (IVIGSIWILAFLLALPQCLYS). The Extracellular portion of the chain corresponds to 225–247 (KTKVMPGRTLCYVQWPEGPKQHF). Residues 248 to 272 (IYHIIVIILVYCFPLLIMGITYTIV) traverse the membrane as a helical segment. The Cytoplasmic segment spans residues 273-301 (GITLWGGEIPGDTCDKYHEQLKAKRKVVK). A helical transmembrane segment spans residues 302-323 (MMIIVVVTFAICWLPYHIYFIL). The Extracellular segment spans residues 324–336 (TAIYQQLNRWKYI). A helical transmembrane segment spans residues 337-361 (QQVYLASFWLAMSSTMYNPIIYCCL). Residues 362–467 (NKRFRAGFKR…SPYTSMEEYS (106 aa)) lie on the Cytoplasmic side of the membrane. A lipid anchor (S-palmitoyl cysteine) is attached at cysteine 376. A disordered region spans residues 416–467 (DPSDADNTRSSRKKRATPGDPNFNGCSRRNSKSASTTSSFISSPYTSMEEYS). Residues 447–467 (KSASTTSSFISSPYTSMEEYS) are compositionally biased toward low complexity.

Belongs to the G-protein coupled receptor 1 family.

The protein localises to the cell membrane. Its function is as follows. This is a receptor for the tachykinin neuropeptide neuromedin-K (neurokinin B). It is associated with G proteins that activate a phosphatidylinositol-calcium second messenger system. This is Neuromedin-K receptor (TACR3) from Oryctolagus cuniculus (Rabbit).